Consider the following 465-residue polypeptide: Protein hedgehog (465 aa).

Cys-79 carries the N-palmitoyl cysteine lipid modification. The Ca(2+) site is built by Glu-143, Glu-144, Asp-149, Thr-179, Glu-180, Asp-183, and Asp-185. Residue Gly-251 is the site of Cholesterol glycine ester attachment.

The protein belongs to the hedgehog family. In terms of assembly, interacts with shf. Post-translationally, the C-terminal part of the hedgehog protein precursor displays an autoproteolysis activity that results in the cleavage of the full-length protein into two parts (N-product and C-product). In addition, the C-terminal part displays a cholesterol transferase activity that results by the covalent attachment of a cholesterol moiety to the C-terminal of the newly generated N-product. The N-product is the active species in both local and long-range signaling, whereas the C-product has no signaling activity. In terms of processing, cholesterylation is required for N-product targeting to lipid rafts and multimerization. N-palmitoylation by Rasp of the hedgehog N-product, within the secretory pathway, is required for the embryonic and larval patterning activities of the hedgehog signal.

The protein localises to the nucleus. The protein resides in the cytoplasm. It localises to the cell membrane. It carries out the reaction glycyl-L-cysteinyl-[protein] + cholesterol + H(+) = [protein]-C-terminal glycyl cholesterol ester + N-terminal L-cysteinyl-[protein]. Functionally, the C-terminal part of the hedgehog protein precursor displays an autoproteolysis activity that results in the cleavage of the full-length protein into two parts (N-product and C-product). In addition, the C-terminal part displays a cholesterol transferase activity that results by the covalent attachment of a cholesterol moiety to the C-terminal of the newly generated N-product. Once cleaved, the C-product has no signaling activity and diffuses from the cell. In terms of biological role, the dually lipidated hedgehog protein N-product is a morphogen which is essential for a variety of patterning events during development. Establishes the anterior-posterior axis of the embryonic segments and patterns the larval imaginal disks. Binds to the patched (ptc) receptor, which functions in association with smoothened (smo), to activate the transcription of target genes wingless (wg), decapentaplegic (dpp) and ptc. In the absence of hh, ptc represses the constitutive signaling activity of smo through fused (fu). Essential component of a signaling pathway which regulates the Duox-dependent gut immune response to bacterial uracil; required to activate Cad99C-dependent endosome formation, norpA-dependent Ca2+ mobilization and p38 MAPK, which are essential steps in the Duox-dependent production of reactive oxygen species (ROS) in response to intestinal bacterial infection. During photoreceptor differentiation, it up-regulates transcription of Ubr3, which in turn promotes the hh-signaling pathway by mediating the ubiquitination and degradation of cos. In Drosophila sechellia (Fruit fly), this protein is Protein hedgehog.